Consider the following 309-residue polypeptide: MSKIVVALGGNALGQSPKEQLDLLKSTSKSLVSLIDKGYEIVISHGNGPQVGSINLGLNYAAEHKQGPPFPFPECGAMSQAYIGYQMQESLQNELHSMGIDKQVVTLVTQVQVASDDSAFNNPTKPIGLFYTKEQADKFTKEKGYTFVEDSGRGYRRVVPSPQPISIVELDSIETLITHGTLVIAAGGGGIPVIKENEVYTGVDAVIDKDKTSALLAAHLQSDQLIILTAVDHVYINYGKENQRGLDEVSVDEMKKHISDGQFAKGSMLPKVEAALQFLEKNTKGSVLITSLAGLGDALDGKIGTLIKN.

This sequence belongs to the carbamate kinase family.

The protein resides in the cytoplasm. The enzyme catalyses hydrogencarbonate + NH4(+) + ATP = carbamoyl phosphate + ADP + H2O + H(+). The protein operates within metabolic intermediate metabolism; carbamoyl phosphate degradation; CO(2) and NH(3) from carbamoyl phosphate: step 1/1. The protein is Carbamate kinase 3 (arcC3) of Staphylococcus aureus (strain USA300).